A 127-amino-acid polypeptide reads, in one-letter code: Small ribosomal subunit protein uS11 (127 aa).

The protein belongs to the universal ribosomal protein uS11 family. In terms of assembly, part of the 30S ribosomal subunit. Interacts with proteins S7 and S18. Binds to IF-3.

Its function is as follows. Located on the platform of the 30S subunit, it bridges several disparate RNA helices of the 16S rRNA. Forms part of the Shine-Dalgarno cleft in the 70S ribosome. The polypeptide is Small ribosomal subunit protein uS11 (Rickettsia bellii (strain RML369-C)).